The primary structure comprises 339 residues: Longiborneol synthase CLM1 (339 aa).

Over residues 1-17 (MLATPTLSNFDKPSLPS) the composition is skewed to polar residues. The segment at 1–21 (MLATPTLSNFDKPSLPSSEGG) is disordered. Asp112, Asn241, Ser245, and Glu249 together coordinate Mg(2+). An NDXXSXXXE magnesium-binding motif motif is present at residues 241–249 (NDVLSFYKE).

This sequence belongs to the trichodiene synthase family. Requires Mg(2+) as cofactor. Mn(2+) is required as a cofactor.

It carries out the reaction (2E,6E)-farnesyl diphosphate + H2O = (-)-longiborneol + diphosphate. Its pathway is mycotoxin biosynthesis. Functionally, terpene cyclase involved in the biosynthesis of culmorin, a tricyclic sesquiterpene diol reported to have antifungal activity and some phytotoxicity to wheat coleoptile tissue, contributing to Fusarium head blight disease. The terpene cyclase CLM1 is responsible for the cyclization of farnesyl diphosphate into the intermediate longiborneol. Longiborneol is then hydroxylated in a regio- and endo-stereoselective manner at position C-11 by the cytochrome P450 monooxygenase CLM2 to produce culmorin. Additional non-specific oxygenases are also able to hydroxylate longiborneol at other sites than C-11 leading to 3-hydroxylongiborneol, 5-hydroxylongiborneol, 12-hydroxylongiborneol and 15-hydroxylongiborneol. Moreover, another oxygenase capable of installing a C-11 exo-hydroxy group in longiborneol can also yield 11-epi-acetylculmorin. The production of these longiborneol derivatives is dwarfed by the high abundance of culmorin, suggesting that CLM2 displays superior enzymatic activity to the unidentified, possibly promiscuous, additional oxygenases. This chain is Longiborneol synthase CLM1, found in Gibberella zeae (strain ATCC MYA-4620 / CBS 123657 / FGSC 9075 / NRRL 31084 / PH-1) (Wheat head blight fungus).